A 574-amino-acid polypeptide reads, in one-letter code: Myo-inositol transporter FST1 (574 aa).

The Cytoplasmic segment spans residues 1–76; that stretch reads MGKSRQNSTT…VQFANPKHFT (76 aa). The helical transmembrane segment at 77–97 threads the bilayer; the sequence is WLLVAFASMGGLLSGLDQSLI. Residues 98–115 are Extracellular-facing; it reads SGANLFLPDDLGLTEHEN. Residues 116–136 form a helical membrane-spanning segment; that stretch reads SLVNSGMPLGAVGGALLLSPA. Residues 137 to 143 are Cytoplasmic-facing; the sequence is NEYFGRK. Residues 144-164 form a helical membrane-spanning segment; the sequence is GAIIISIILYTIGAALEAGSI. Residues 165–173 lie on the Extracellular side of the membrane; sequence NFGMIVSSR. The helical transmembrane segment at 174-194 threads the bilayer; that stretch reads VILGLGVGLEGGTVPVYVAET. Residues 195 to 205 are Cytoplasmic-facing; it reads VERRIRGNLVS. A helical membrane pass occupies residues 206–226; that stretch reads LYQFNIALGEVLGYAVGAIFL. Over 227–233 the chain is Extracellular; sequence NVPGNWR. The chain crosses the membrane as a helical span at residues 234-254; that stretch reads YILGSSLLFSTIMFFGMLFLP. Residues 255-330 are Cytoplasmic-facing; the sequence is ESPRFLIHQK…RARRALVYAN (76 aa). Residues 331–351 traverse the membrane as a helical segment; sequence IMILLGQLTGVNAIMYYMSVL. Topologically, residues 352–363 are extracellular; the sequence is MNQIGFDKKESN. Residues 364-384 form a helical membrane-spanning segment; the sequence is YMSLVGGGSLLLGTIPAIFLM. Residues 385 to 390 are Cytoplasmic-facing; that stretch reads ERFGRR. The helical transmembrane segment at 391 to 411 threads the bilayer; sequence FWAITMLPGFFIGLVLIGVSY. Topologically, residues 412-426 are extracellular; the sequence is QFDVETQLQTVEGLY. The helical transmembrane segment at 427 to 447 threads the bilayer; it reads LSGLIIYMGFFGSYACLTWVV. Over 448–465 the chain is Cytoplasmic; that stretch reads PSEVYPTYLRSYGMTTSD. The chain crosses the membrane as a helical span at residues 466–486; sequence ALLFLASFIVTYNFTAMQNAM. At 487–490 the chain is on the extracellular side; it reads GKTG. Residues 491 to 511 form a helical membrane-spanning segment; that stretch reads LALGFYGGIAFIGEIYQIFFM. The Cytoplasmic portion of the chain corresponds to 512 to 574; that stretch reads PETKNKTLEE…PKDQVQVSHA (63 aa).

The protein belongs to the major facilitator superfamily. Sugar transporter (TC 2.A.1.1) family.

The protein localises to the cell membrane. The catalysed reaction is myo-inositol(out) + H(+)(out) = myo-inositol(in) + H(+)(in). Transporter for myo-inositol. Also appears to transport the polyketide mycotoxin fumonisin B1 (FB1). Does not appear to transport hexose sugars. This chain is Myo-inositol transporter FST1, found in Gibberella moniliformis (strain M3125 / FGSC 7600) (Maize ear and stalk rot fungus).